We begin with the raw amino-acid sequence, 457 residues long: Histidine--tRNA ligase (457 aa).

The protein belongs to the class-II aminoacyl-tRNA synthetase family. Homodimer.

It localises to the cytoplasm. The enzyme catalyses tRNA(His) + L-histidine + ATP = L-histidyl-tRNA(His) + AMP + diphosphate + H(+). The chain is Histidine--tRNA ligase from Mesoplasma florum (strain ATCC 33453 / NBRC 100688 / NCTC 11704 / L1) (Acholeplasma florum).